The chain runs to 276 residues: Monoglyceride lipase homolog (276 aa).

This sequence belongs to the orthopoxvirus OPG043 family.

The protein is Monoglyceride lipase homolog (OPG043) of Cynomys gunnisoni (Gunnison's prairie dog).